The sequence spans 470 residues: ATP synthase subunit beta (470 aa).

Gly157 to Thr164 is an ATP binding site.

It belongs to the ATPase alpha/beta chains family. F-type ATPases have 2 components, CF(1) - the catalytic core - and CF(0) - the membrane proton channel. CF(1) has five subunits: alpha(3), beta(3), gamma(1), delta(1), epsilon(1). CF(0) has three main subunits: a(1), b(2) and c(9-12). The alpha and beta chains form an alternating ring which encloses part of the gamma chain. CF(1) is attached to CF(0) by a central stalk formed by the gamma and epsilon chains, while a peripheral stalk is formed by the delta and b chains.

The protein localises to the cell inner membrane. The enzyme catalyses ATP + H2O + 4 H(+)(in) = ADP + phosphate + 5 H(+)(out). In terms of biological role, produces ATP from ADP in the presence of a proton gradient across the membrane. The catalytic sites are hosted primarily by the beta subunits. In Citrifermentans bemidjiense (strain ATCC BAA-1014 / DSM 16622 / JCM 12645 / Bem) (Geobacter bemidjiensis), this protein is ATP synthase subunit beta.